Consider the following 346-residue polypeptide: Protein pelota homolog (346 aa).

Belongs to the eukaryotic release factor 1 family. Pelota subfamily. As to quaternary structure, monomer. A divalent metal cation serves as cofactor.

Its subcellular location is the cytoplasm. May function in recognizing stalled ribosomes, interact with stem-loop structures in stalled mRNA molecules, and effect endonucleolytic cleavage of the mRNA. May play a role in the release non-functional ribosomes and degradation of damaged mRNAs. Has endoribonuclease activity. The polypeptide is Protein pelota homolog (Ignicoccus hospitalis (strain KIN4/I / DSM 18386 / JCM 14125)).